Here is a 164-residue protein sequence, read N- to C-terminus: MGDLPGIVRLSIALRIQPNDGPVFFKVDGQRFGQNRTIKLLTGSSYKVEVKIKPTTLQVENISIGGVLVPLELKCKEPDGERVVYTGIYDTEGVAPTKSGERQPIQITMPFTDIGTFETVWQVKFYNYHKRDHCQWGSPFSVIEYECKPNETRSLMWVNKESFL.

The protein belongs to the CNRIP family. Interacts with the cannabinoid receptor CNR1 (via C-terminus). Does not interact with cannabinoid receptor CNR2.

Functionally, suppresses cannabinoid receptor CNR1-mediated tonic inhibition of voltage-gated calcium channels. The chain is CB1 cannabinoid receptor-interacting protein 1 (Cnrip1) from Rattus norvegicus (Rat).